A 379-amino-acid chain; its full sequence is Chaperone protein DnaJ (379 aa).

The J domain maps to 5–69; the sequence is EYYERLGVDK…QKRAAYDQYG (65 aa). The segment at 141 to 223 adopts a CR-type zinc-finger fold; the sequence is GVEKQVKYNR…CHGSGHEKVA (83 aa). 8 residues coordinate Zn(2+): Cys154, Cys157, Cys171, Cys174, Cys197, Cys200, Cys211, and Cys214. CXXCXGXG motif repeat units lie at residues 154–161, 171–178, 197–204, and 211–218; these read CHTCDGSG, CHKCGGRG, CDVCHGTG, and CTTCHGSG.

It belongs to the DnaJ family. As to quaternary structure, homodimer. Zn(2+) serves as cofactor.

The protein localises to the cytoplasm. Participates actively in the response to hyperosmotic and heat shock by preventing the aggregation of stress-denatured proteins and by disaggregating proteins, also in an autonomous, DnaK-independent fashion. Unfolded proteins bind initially to DnaJ; upon interaction with the DnaJ-bound protein, DnaK hydrolyzes its bound ATP, resulting in the formation of a stable complex. GrpE releases ADP from DnaK; ATP binding to DnaK triggers the release of the substrate protein, thus completing the reaction cycle. Several rounds of ATP-dependent interactions between DnaJ, DnaK and GrpE are required for fully efficient folding. Also involved, together with DnaK and GrpE, in the DNA replication of plasmids through activation of initiation proteins. The polypeptide is Chaperone protein DnaJ (Lactococcus lactis subsp. cremoris (strain SK11)).